The following is a 454-amino-acid chain: UPF0210 protein BAD_1323 (454 aa).

The protein belongs to the UPF0210 family. Homodimer.

The chain is UPF0210 protein BAD_1323 from Bifidobacterium adolescentis (strain ATCC 15703 / DSM 20083 / NCTC 11814 / E194a).